Consider the following 244-residue polypeptide: Purine nucleoside phosphorylase HI_0175 (244 aa).

Positions 70, 105, and 122 each coordinate Zn(2+).

The protein belongs to the purine nucleoside phosphorylase YfiH/LACC1 family. As to quaternary structure, homodimer. Cu(2+) serves as cofactor. It depends on Zn(2+) as a cofactor.

It catalyses the reaction adenosine + phosphate = alpha-D-ribose 1-phosphate + adenine. The catalysed reaction is S-methyl-5'-thioadenosine + phosphate = 5-(methylsulfanyl)-alpha-D-ribose 1-phosphate + adenine. The enzyme catalyses inosine + phosphate = alpha-D-ribose 1-phosphate + hypoxanthine. It carries out the reaction adenosine + H2O + H(+) = inosine + NH4(+). Functionally, purine nucleoside enzyme that catalyzes the phosphorolysis of adenosine and inosine nucleosides, yielding D-ribose 1-phosphate and the respective free bases, adenine and hypoxanthine. Also catalyzes the phosphorolysis of S-methyl-5'-thioadenosine into adenine and S-methyl-5-thio-alpha-D-ribose 1-phosphate. Also has adenosine deaminase activity. This Haemophilus influenzae (strain ATCC 51907 / DSM 11121 / KW20 / Rd) protein is Purine nucleoside phosphorylase HI_0175.